We begin with the raw amino-acid sequence, 394 residues long: Elongation factor Tu 2 (394 aa).

The tr-type G domain maps to 10–204 (KPHVNVGTIG…YLDSYIPEPE (195 aa)). Positions 19–26 (GHVDHGKT) are G1. 19 to 26 (GHVDHGKT) serves as a coordination point for GTP. A Mg(2+)-binding site is contributed by threonine 26. The G2 stretch occupies residues 60-64 (GITIN). Positions 81 to 84 (DCPG) are G3. Residues 81–85 (DCPGH) and 136–139 (NKCD) contribute to the GTP site. Residues 136–139 (NKCD) are G4. Residues 174–176 (SAL) form a G5 region.

The protein belongs to the TRAFAC class translation factor GTPase superfamily. Classic translation factor GTPase family. EF-Tu/EF-1A subfamily. Monomer.

It localises to the cytoplasm. It carries out the reaction GTP + H2O = GDP + phosphate + H(+). GTP hydrolase that promotes the GTP-dependent binding of aminoacyl-tRNA to the A-site of ribosomes during protein biosynthesis. The polypeptide is Elongation factor Tu 2 (Yersinia pseudotuberculosis serotype O:1b (strain IP 31758)).